Here is a 206-residue protein sequence, read N- to C-terminus: Phosphoheptose isomerase (206 aa).

Residues 37 to 195 (LVDAFKAGKK…IEQKMDINNE (159 aa)) enclose the SIS domain. 52-54 (NGG) serves as a coordination point for substrate. Zn(2+) is bound by residues His61 and Glu65. Substrate-binding positions include Glu65, 93–94 (ND), 119–121 (STS), Ser124, and Gln172. Zn(2+) is bound by residues Gln172 and His180.

It belongs to the SIS family. GmhA subfamily. In terms of assembly, homotetramer. Requires Zn(2+) as cofactor.

It localises to the cytoplasm. The enzyme catalyses 2 D-sedoheptulose 7-phosphate = D-glycero-alpha-D-manno-heptose 7-phosphate + D-glycero-beta-D-manno-heptose 7-phosphate. Its pathway is carbohydrate biosynthesis; D-glycero-D-manno-heptose 7-phosphate biosynthesis; D-glycero-alpha-D-manno-heptose 7-phosphate and D-glycero-beta-D-manno-heptose 7-phosphate from sedoheptulose 7-phosphate: step 1/1. In terms of biological role, catalyzes the isomerization of sedoheptulose 7-phosphate in D-glycero-D-manno-heptose 7-phosphate. This Hamiltonella defensa subsp. Acyrthosiphon pisum (strain 5AT) protein is Phosphoheptose isomerase.